The sequence spans 348 residues: Papaya proteinase 4 (348 aa).

Residues methionine 1–phenylalanine 18 form the signal peptide. A propeptide spans glycine 19–aspartate 132 (activation peptide). Disulfide bonds link cysteine 154–cysteine 195, cysteine 188–cysteine 227, and cysteine 285–cysteine 336. Cysteine 157 is an active-site residue. Catalysis depends on residues histidine 291 and asparagine 311.

Belongs to the peptidase C1 family.

It catalyses the reaction Preferential cleavage: Gly-|-Xaa, in proteins and in small molecule substrates.. Its activity is regulated as follows. Not inhibited by cystatin. Thiol protease with a substrate specificity very different from the other thiol proteases. This is Papaya proteinase 4 from Carica papaya (Papaya).